The chain runs to 260 residues: tRNA pseudouridine synthase B (260 aa).

Position 44 (histidine 44) interacts with substrate. Residue aspartate 49 is the Nucleophile of the active site. 3 residues coordinate substrate: tyrosine 77, tyrosine 180, and leucine 201.

This sequence belongs to the pseudouridine synthase TruB family. Type 1 subfamily.

The enzyme catalyses uridine(55) in tRNA = pseudouridine(55) in tRNA. In terms of biological role, responsible for synthesis of pseudouridine from uracil-55 in the psi GC loop of transfer RNAs. The chain is tRNA pseudouridine synthase B from Blochmanniella pennsylvanica (strain BPEN).